The primary structure comprises 134 residues: Profilin-3 (134 aa).

A disulfide bridge connects residues Cys-13 and Cys-118. The short motif at 84 to 100 (AVIRGKKGSGGITIKKT) is the Involved in PIP2 interaction element. Position 114 is a phosphothreonine (Thr-114).

Belongs to the profilin family. As to quaternary structure, occurs in many kinds of cells as a complex with monomeric actin in a 1:1 ratio. Phosphorylated by MAP kinases.

Its subcellular location is the cytoplasm. The protein resides in the cytoskeleton. Its function is as follows. Binds to actin and affects the structure of the cytoskeleton. At high concentrations, profilin prevents the polymerization of actin, whereas it enhances it at low concentrations. The polypeptide is Profilin-3 (Olea europaea (Common olive)).